Consider the following 78-residue polypeptide: D-alanyl carrier protein (78 aa).

One can recognise a Carrier domain in the interval 1-78; it reads MEFREQVLNL…KIVEALEELR (78 aa). Ser-36 carries the post-translational modification O-(pantetheine 4'-phosphoryl)serine.

It belongs to the DltC family. 4'-phosphopantetheine is transferred from CoA to a specific serine of apo-DCP.

The protein localises to the cytoplasm. Its pathway is cell wall biogenesis; lipoteichoic acid biosynthesis. Its function is as follows. Carrier protein involved in the D-alanylation of lipoteichoic acid (LTA). The loading of thioester-linked D-alanine onto DltC is catalyzed by D-alanine--D-alanyl carrier protein ligase DltA. The DltC-carried D-alanyl group is further transferred to cell membrane phosphatidylglycerol (PG) by forming an ester bond, probably catalyzed by DltD. D-alanylation of LTA plays an important role in modulating the properties of the cell wall in Gram-positive bacteria, influencing the net charge of the cell wall. The sequence is that of D-alanyl carrier protein from Staphylococcus aureus (strain Mu50 / ATCC 700699).